The sequence spans 743 residues: Zinc finger CCHC domain-containing protein 8 (743 aa).

Residues 29 to 67 (DSEGEANDVQELVSQHEETINRLSAENQELKRRLSLLNR) adopt a coiled-coil conformation. A CCHC-type zinc finger spans residues 213 to 230 (PCCFNCGSEEHQMRDCPK). 5 disordered regions span residues 390–432 (YLTD…SAVM), 449–518 (KGYM…VLDE), 540–566 (GESTNSDCDAHTPITVSSVTSSPSRTE), 600–649 (EGGP…EDSN), and 662–700 (NKLSSKHENASEKNPSDEDATEEAACVEPSPKRSGVPDV). The segment covering 399–413 (SSNKSNKRSSCQSSS) has biased composition (low complexity). Positions 455 to 504 (PPLPPGSPSYGTPPPLPRGTPPSTPPNFIPPPPPTPTPPPLPKGTPPPTP) are enriched in pro residues. Composition is skewed to low complexity over residues 551–564 (TPITVSSVTSSPSR) and 601–637 (GGPLIPEEGGPLIPEEGGPLIPEEGGPLIPEEGGPLI). Over residues 638–649 (PEEDSETNEDSN) the composition is skewed to acidic residues. Residues 666-677 (SKHENASEKNPS) are compositionally biased toward basic and acidic residues.

It belongs to the ZCCHC8 family.

It is found in the nucleus. The protein localises to the nucleoplasm. Functionally, scaffolding subunit of the trimeric nuclear exosome targeting (NEXT) complex that is involved in the surveillance and turnover of aberrant transcripts and non-coding RNAs. NEXT functions as an RNA exosome cofactor that directs a subset of non-coding short-lived RNAs for exosomal degradation. May be involved in pre-mRNA splicing. It is required for 3'-end maturation of telomerase RNA component (TERC), TERC 3'-end targeting to the nuclear RNA exosome, and for telomerase function. This is Zinc finger CCHC domain-containing protein 8 (zcchc8) from Xenopus laevis (African clawed frog).